The following is a 151-amino-acid chain: D-aminoacyl-tRNA deacylase (151 aa).

Positions 142 to 143 (GP) match the Gly-cisPro motif, important for rejection of L-amino acids motif.

The protein belongs to the DTD family. As to quaternary structure, homodimer.

Its subcellular location is the cytoplasm. The enzyme catalyses glycyl-tRNA(Ala) + H2O = tRNA(Ala) + glycine + H(+). The catalysed reaction is a D-aminoacyl-tRNA + H2O = a tRNA + a D-alpha-amino acid + H(+). An aminoacyl-tRNA editing enzyme that deacylates mischarged D-aminoacyl-tRNAs. Also deacylates mischarged glycyl-tRNA(Ala), protecting cells against glycine mischarging by AlaRS. Acts via tRNA-based rather than protein-based catalysis; rejects L-amino acids rather than detecting D-amino acids in the active site. By recycling D-aminoacyl-tRNA to D-amino acids and free tRNA molecules, this enzyme counteracts the toxicity associated with the formation of D-aminoacyl-tRNA entities in vivo and helps enforce protein L-homochirality. The protein is D-aminoacyl-tRNA deacylase of Psychrobacter arcticus (strain DSM 17307 / VKM B-2377 / 273-4).